A 425-amino-acid polypeptide reads, in one-letter code: Dihydroorotase (425 aa).

Zn(2+)-binding residues include histidine 59 and histidine 61. Substrate contacts are provided by residues 61 to 63 (HLR) and asparagine 93. Residues aspartate 151, histidine 178, and histidine 231 each coordinate Zn(2+). Residue asparagine 277 participates in substrate binding. Aspartate 304 is a binding site for Zn(2+). The active site involves aspartate 304. Residues histidine 308 and 322 to 323 (FG) each bind substrate.

The protein belongs to the metallo-dependent hydrolases superfamily. DHOase family. Class I DHOase subfamily. Zn(2+) is required as a cofactor.

The catalysed reaction is (S)-dihydroorotate + H2O = N-carbamoyl-L-aspartate + H(+). It functions in the pathway pyrimidine metabolism; UMP biosynthesis via de novo pathway; (S)-dihydroorotate from bicarbonate: step 3/3. Functionally, catalyzes the reversible cyclization of carbamoyl aspartate to dihydroorotate. This is Dihydroorotase from Staphylococcus epidermidis (strain ATCC 35984 / DSM 28319 / BCRC 17069 / CCUG 31568 / BM 3577 / RP62A).